We begin with the raw amino-acid sequence, 194 residues long: Probable GTP-binding protein EngB (194 aa).

Residues 22–194 (PLPEVALAGR…AWKAILHAIS (173 aa)) form the EngB-type G domain. Residues 30 to 37 (GRSNVGKS), 57 to 61 (GKTQT), 75 to 78 (DVPG), 142 to 145 (TKCD), and 174 to 176 (FSS) each bind GTP. Residues Ser37 and Thr59 each coordinate Mg(2+).

The protein belongs to the TRAFAC class TrmE-Era-EngA-EngB-Septin-like GTPase superfamily. EngB GTPase family. The cofactor is Mg(2+).

Necessary for normal cell division and for the maintenance of normal septation. The chain is Probable GTP-binding protein EngB from Halalkalibacterium halodurans (strain ATCC BAA-125 / DSM 18197 / FERM 7344 / JCM 9153 / C-125) (Bacillus halodurans).